Consider the following 122-residue polypeptide: MIQPQTYLEVADNTGARKIMCIRVLKGSNAKYATVGDVIVASVKEAIPRGAVKEGDVVKAVVVRTKKEVKRPDGSAIRFDDNAAVIINNQLEPRGTRVFGPVARELREKGFMKIVSLAPEVL.

Belongs to the universal ribosomal protein uL14 family. Part of the 50S ribosomal subunit. Forms a cluster with proteins L3 and L19. In the 70S ribosome, L14 and L19 interact and together make contacts with the 16S rRNA in bridges B5 and B8.

In terms of biological role, binds to 23S rRNA. Forms part of two intersubunit bridges in the 70S ribosome. The chain is Large ribosomal subunit protein uL14 from Thermus aquaticus.